The chain runs to 72 residues: Putative membrane protein insertion efficiency factor (72 aa).

It belongs to the UPF0161 family.

It localises to the cell inner membrane. Functionally, could be involved in insertion of integral membrane proteins into the membrane. The protein is Putative membrane protein insertion efficiency factor of Trichodesmium erythraeum (strain IMS101).